Here is a 326-residue protein sequence, read N- to C-terminus: Eukaryotic translation initiation factor 3 subunit I (326 aa).

5 WD repeats span residues 8–47 (GHER…RLGT), 50–89 (GHQG…VIAS), 145–184 (MTES…KVVD), 188–227 (DHSA…CLKT), and 285–326 (GHFG…NIFE).

It belongs to the eIF-3 subunit I family. As to quaternary structure, component of the eukaryotic translation initiation factor 3 (eIF-3) complex. The eIF-3 complex interacts with pix.

Its subcellular location is the cytoplasm. In terms of biological role, component of the eukaryotic translation initiation factor 3 (eIF-3) complex, which is involved in protein synthesis of a specialized repertoire of mRNAs and, together with other initiation factors, stimulates binding of mRNA and methionyl-tRNAi to the 40S ribosome. The eIF-3 complex specifically targets and initiates translation of a subset of mRNAs involved in cell proliferation. The sequence is that of Eukaryotic translation initiation factor 3 subunit I from Drosophila erecta (Fruit fly).